A 102-amino-acid chain; its full sequence is Flagellar hook-basal body complex protein FliE (102 aa).

This sequence belongs to the FliE family.

The protein localises to the bacterial flagellum basal body. This chain is Flagellar hook-basal body complex protein FliE, found in Oceanobacillus iheyensis (strain DSM 14371 / CIP 107618 / JCM 11309 / KCTC 3954 / HTE831).